We begin with the raw amino-acid sequence, 158 residues long: NADPH-dependent 7-cyano-7-deazaguanine reductase (158 aa).

The segment at 1–37 (MAKRSIKSETSPELQLGRPVTAPDSPETARLDRVPNP) is disordered. Positions 27–37 (ETARLDRVPNP) are enriched in basic and acidic residues. Cys56 acts as the Thioimide intermediate in catalysis. Catalysis depends on Asp63, which acts as the Proton donor. Substrate is bound by residues 78–80 (VES) and 97–98 (HE).

This sequence belongs to the GTP cyclohydrolase I family. QueF type 1 subfamily.

It is found in the cytoplasm. The catalysed reaction is 7-aminomethyl-7-carbaguanine + 2 NADP(+) = 7-cyano-7-deazaguanine + 2 NADPH + 3 H(+). It functions in the pathway tRNA modification; tRNA-queuosine biosynthesis. Its function is as follows. Catalyzes the NADPH-dependent reduction of 7-cyano-7-deazaguanine (preQ0) to 7-aminomethyl-7-deazaguanine (preQ1). This Bradyrhizobium sp. (strain BTAi1 / ATCC BAA-1182) protein is NADPH-dependent 7-cyano-7-deazaguanine reductase.